The sequence spans 858 residues: Beta-galactosidase 6 (858 aa).

The first 30 residues, 1 to 30, serve as a signal peptide directing secretion; that stretch reads MAAATVGVLLRLLLLPVVVVVSLLVGASRA. N-linked (GlcNAc...) asparagine glycosylation occurs at asparagine 32. Glutamate 189 serves as the catalytic Proton donor. Glutamate 258 (nucleophile) is an active-site residue. N-linked (GlcNAc...) asparagine glycosylation is found at asparagine 259, asparagine 482, asparagine 507, asparagine 595, and asparagine 830. In terms of domain architecture, SUEL-type lectin spans 772–858; it reads QTQGPALRLE…KSLVVEAACS (87 aa).

This sequence belongs to the glycosyl hydrolase 35 family.

It is found in the secreted. The protein resides in the extracellular space. Its subcellular location is the apoplast. The catalysed reaction is Hydrolysis of terminal non-reducing beta-D-galactose residues in beta-D-galactosides.. In terms of biological role, releases galactose by hydrolysis of plant cell wall galactose-containing polysaccharides such as galacto-xyloglucan, pectic galactan and galactan (in vitro). This Oryza sativa subsp. japonica (Rice) protein is Beta-galactosidase 6.